The primary structure comprises 207 residues: N-(5'-phosphoribosyl)anthranilate isomerase (207 aa).

Belongs to the TrpF family.

It carries out the reaction N-(5-phospho-beta-D-ribosyl)anthranilate = 1-(2-carboxyphenylamino)-1-deoxy-D-ribulose 5-phosphate. It participates in amino-acid biosynthesis; L-tryptophan biosynthesis; L-tryptophan from chorismate: step 3/5. The protein is N-(5'-phosphoribosyl)anthranilate isomerase of Stutzerimonas stutzeri (strain A1501) (Pseudomonas stutzeri).